The chain runs to 92 residues: Large ribosomal subunit protein eL43z (92 aa).

The segment at cysteine 39 to cysteine 60 adopts a C4-type zinc-finger fold.

It belongs to the eukaryotic ribosomal protein eL43 family.

The sequence is that of Large ribosomal subunit protein eL43z (RPL37AB) from Arabidopsis thaliana (Mouse-ear cress).